The chain runs to 83 residues: High-potential iron-sulfur protein (83 aa).

4 residues coordinate [4Fe-4S] cluster: Cys-43, Cys-46, Cys-61, and Cys-75.

It belongs to the high-potential iron-sulfur protein (HiPIP) family. In terms of assembly, homodimer.

The protein localises to the periplasm. Specific class of high-redox-potential 4Fe-4S ferredoxins. Functions in anaerobic electron transport in most purple and in some other photosynthetic bacteria and in at least one genus (Paracoccus) of halophilic, denitrifying bacteria. The chain is High-potential iron-sulfur protein from Isochromatium buderi (Chromatium buderi).